Reading from the N-terminus, the 342-residue chain is MQFIDQAQIEVEAGKGGDGIVAFRREKYVPAGGPSGGNGGRGGSVIFVAVENLQTLLDFRYKHIFKADDGGRGGPNNCTGASGKDLIVQVPCGTTIYDAETGDLLGDLTQPNQELIIAAGGKGGLGNQYFLSNRNRAPEYSLPGLPGERKLLRLELKLLAEVGIIGLPNAGKSTLISSLSAARPKIADYPFTTLIPNLGVVRKPTGDGTVFADIPGLIEGAADGAGLGHDFLRHIERTRVLLHLIDATSDDVIRDYNTIEQELQAYGRGLNERMQILALNKIDAVDRETVDLEALAIQLNHLSHAPVFLISAVTRTGLEPMLQEVWGILDQVNALEEAEVFS.

In terms of domain architecture, Obg spans 1–159 (MQFIDQAQIE…KLLRLELKLL (159 aa)). The OBG-type G domain occupies 160–330 (AEVGIIGLPN…MLQEVWGILD (171 aa)). GTP is bound by residues 166 to 173 (GLPNAGKS), 191 to 195 (FTTLI), 213 to 216 (DIPG), 280 to 283 (NKID), and 311 to 313 (SAV). Residues S173 and T193 each coordinate Mg(2+).

This sequence belongs to the TRAFAC class OBG-HflX-like GTPase superfamily. OBG GTPase family. As to quaternary structure, monomer. Requires Mg(2+) as cofactor.

The protein resides in the cytoplasm. In terms of biological role, an essential GTPase which binds GTP, GDP and possibly (p)ppGpp with moderate affinity, with high nucleotide exchange rates and a fairly low GTP hydrolysis rate. Plays a role in control of the cell cycle, stress response, ribosome biogenesis and in those bacteria that undergo differentiation, in morphogenesis control. In Nostoc sp. (strain PCC 7120 / SAG 25.82 / UTEX 2576), this protein is GTPase Obg.